A 236-amino-acid chain; its full sequence is Ribose-5-phosphate isomerase A (236 aa).

Residues 33-36, 90-93, and 103-106 contribute to the substrate site; these read TGST, DGAD, and KGGG. Glu-112 functions as the Proton acceptor in the catalytic mechanism. Position 130 (Lys-130) interacts with substrate.

Belongs to the ribose 5-phosphate isomerase family. Homodimer.

It catalyses the reaction aldehydo-D-ribose 5-phosphate = D-ribulose 5-phosphate. It functions in the pathway carbohydrate degradation; pentose phosphate pathway; D-ribose 5-phosphate from D-ribulose 5-phosphate (non-oxidative stage): step 1/1. Catalyzes the reversible conversion of ribose-5-phosphate to ribulose 5-phosphate. In Trichormus variabilis (strain ATCC 29413 / PCC 7937) (Anabaena variabilis), this protein is Ribose-5-phosphate isomerase A.